The primary structure comprises 631 residues: Phosphomethylpyrimidine synthase (631 aa).

Substrate contacts are provided by residues asparagine 239, methionine 268, tyrosine 297, histidine 333, 353 to 355 (SRG), 394 to 397 (DGLR), and glutamate 433. Histidine 437 is a Zn(2+) binding site. Tyrosine 460 contacts substrate. Histidine 501 provides a ligand contact to Zn(2+). Residues cysteine 581, cysteine 584, and cysteine 589 each coordinate [4Fe-4S] cluster.

It belongs to the ThiC family. As to quaternary structure, homodimer. Requires [4Fe-4S] cluster as cofactor.

It catalyses the reaction 5-amino-1-(5-phospho-beta-D-ribosyl)imidazole + S-adenosyl-L-methionine = 4-amino-2-methyl-5-(phosphooxymethyl)pyrimidine + CO + 5'-deoxyadenosine + formate + L-methionine + 3 H(+). The protein operates within cofactor biosynthesis; thiamine diphosphate biosynthesis. In terms of biological role, catalyzes the synthesis of the hydroxymethylpyrimidine phosphate (HMP-P) moiety of thiamine from aminoimidazole ribotide (AIR) in a radical S-adenosyl-L-methionine (SAM)-dependent reaction. The sequence is that of Phosphomethylpyrimidine synthase from Escherichia coli (strain SMS-3-5 / SECEC).